The chain runs to 120 residues: Large ribosomal subunit protein uL18 (120 aa).

This sequence belongs to the universal ribosomal protein uL18 family. Part of the 50S ribosomal subunit; part of the 5S rRNA/L5/L18/L25 subcomplex. Contacts the 5S and 23S rRNAs.

Functionally, this is one of the proteins that bind and probably mediate the attachment of the 5S RNA into the large ribosomal subunit, where it forms part of the central protuberance. This is Large ribosomal subunit protein uL18 from Geobacillus sp. (strain WCH70).